The chain runs to 357 residues: Neutral protease 2 homolog UREG_02006 (357 aa).

Positions 1–19 (MLFSSRFLALAALLGQALA) are cleaved as a signal peptide. A propeptide spanning residues 20–179 (LPIDDFSQSD…QSAVPTIEKR (160 aa)) is cleaved from the precursor. 2 cysteine pairs are disulfide-bonded: C187/C259 and C266/C284. H308 serves as a coordination point for Zn(2+). E309 is a catalytic residue. H312 and D323 together coordinate Zn(2+).

The protein belongs to the peptidase M35 family. Zn(2+) serves as cofactor.

The protein localises to the secreted. The enzyme catalyses Preferential cleavage of bonds with hydrophobic residues in P1'. Also 3-Asn-|-Gln-4 and 8-Gly-|-Ser-9 bonds in insulin B chain.. Secreted metalloproteinase that allows assimilation of proteinaceous substrates. Shows high activities on basic nuclear substrates such as histone and protamine. This Uncinocarpus reesii (strain UAMH 1704) protein is Neutral protease 2 homolog UREG_02006.